A 305-amino-acid polypeptide reads, in one-letter code: Elongation factor Ts (305 aa).

Residues 79–82 (TDFV) are involved in Mg(2+) ion dislocation from EF-Tu.

The protein belongs to the EF-Ts family.

It localises to the cytoplasm. Functionally, associates with the EF-Tu.GDP complex and induces the exchange of GDP to GTP. It remains bound to the aminoacyl-tRNA.EF-Tu.GTP complex up to the GTP hydrolysis stage on the ribosome. The polypeptide is Elongation factor Ts (Brucella anthropi (strain ATCC 49188 / DSM 6882 / CCUG 24695 / JCM 21032 / LMG 3331 / NBRC 15819 / NCTC 12168 / Alc 37) (Ochrobactrum anthropi)).